Consider the following 343-residue polypeptide: Heat-inducible transcription repressor HrcA (343 aa).

The protein belongs to the HrcA family.

Functionally, negative regulator of class I heat shock genes (grpE-dnaK-dnaJ and groELS operons). Prevents heat-shock induction of these operons. The protein is Heat-inducible transcription repressor HrcA of Clostridium botulinum (strain Alaska E43 / Type E3).